Consider the following 640-residue polypeptide: MDDEETAEIDETNSAAADMQVELGPEQLQQEMPQNGSGDGAAVSAIAAVSTAHVNSRARLENMIEEVDNMFEEVSELMVDVTELMRRANELREDPGTAALAENARPPAEIEEQPAQQEEQASLPYDSPSRASISSRHSGSDMSLDSPGSEDDSDAEAVPRWMIPANRVRSAVDMLVSQARNRDGGIATLLRRENFLQRVRSMVFSQDRIRGRASDEANADVINTVPDETPESPPAPLDVDMEEGVRFDTNLPAEHSYFGTNLNRVPGVDYLEVGSTHRMLIFMHQHILFPGEVLPFMIHGSIIDEEIQDSGRDGVIFGVGFPLMQPPDDNPHKLYGVTCQIYEKGESGRQHVFYKSRALQRIVINCDDIQGPPQYIARNPTMKCYSKVKILPEYFLPEPLKCIDMGSLNRFRDIPSMEKKFRRYQLTSTPWPYEACEEYSFEHIVEKARQKLEIHKIDTMPKCPIQLSFWLVRNLHLTEKMMRLTFLTDSVNIRLQIIDTTLKQESLFYCRYCNSSLAYCSDLFAMSKHGVQTQYCNSAGYIHETNTVYRVIAHAIGYSGEPSTEFSWFPGYQWHIIICKFCAQHVGWEFKAVEPNLAPKVFFGLAGSSVRIGKTSERTPTHGSTFVVRNLLRLVSRELE.

Residues 1–11 (MDDEETAEIDE) are compositionally biased toward acidic residues. Disordered regions lie at residues 1 to 25 (MDDE…ELGP) and 92 to 159 (REDP…EAVP). The span at 113–137 (QPAQQEEQASLPYDSPSRASISSRH) shows a compositional bias: low complexity. The region spanning 278–506 (RMLIFMHQHI…IIDTTLKQES (229 aa)) is the Lon N-terminal domain. The region spanning 505–614 (ESLFYCRYCN…LAGSSVRIGK (110 aa)) is the CULT domain. Positions 510, 513, 579, and 582 each coordinate Zn(2+).

It belongs to the CRBN family. As to quaternary structure, likely a component of a DCX (DDB1-CUL4-X-box) protein ligase complex. May interact with pic/DDB1. In terms of processing, ubiquitinated.

The protein resides in the nucleus. The protein operates within protein modification; protein ubiquitination. Its function is as follows. Substrate recognition component of a DCX (DDB1-CUL4-X-box) E3 protein ligase complex that mediates the ubiquitination and subsequent proteasomal degradation of target proteins. Has an essential role in mediating growth by negatively regulating insulin signaling. It also has a role in maintaining presynaptic function in the neuromuscular junction synapses of third-instar larvae. This Drosophila virilis (Fruit fly) protein is Protein cereblon.